Reading from the N-terminus, the 333-residue chain is Ferrochelatase (333 aa).

2 residues coordinate Fe cation: His-202 and Glu-284.

Belongs to the ferrochelatase family.

It is found in the cytoplasm. It carries out the reaction heme b + 2 H(+) = protoporphyrin IX + Fe(2+). It functions in the pathway porphyrin-containing compound metabolism; protoheme biosynthesis; protoheme from protoporphyrin-IX: step 1/1. Catalyzes the ferrous insertion into protoporphyrin IX. The chain is Ferrochelatase from Francisella tularensis subsp. tularensis (strain FSC 198).